Consider the following 216-residue polypeptide: Probable RNA 2'-phosphotransferase 1 (216 aa).

Belongs to the KptA/TPT1 family.

In terms of biological role, removes the 2'-phosphate from RNA via an intermediate in which the phosphate is ADP-ribosylated by NAD followed by a presumed transesterification to release the RNA and generate ADP-ribose 1''-2''-cyclic phosphate (APPR&gt;P). May function as an ADP-ribosylase. This Archaeoglobus fulgidus (strain ATCC 49558 / DSM 4304 / JCM 9628 / NBRC 100126 / VC-16) protein is Probable RNA 2'-phosphotransferase 1 (kptA1).